The following is a 1419-amino-acid chain: Agglutinin-like protein 5 (1419 aa).

Residues 1 to 17 (MIQQFTLLFLYLSFATA) form the signal peptide. 4 disulfides stabilise this stretch: C73/C150, C96/C112, C205/C298, and C227/C256. ALS repeat units lie at residues 365-396 (TTIT…VDVP), 401-432 (TTVT…VQVP), 438-469 (TTTT…VREP), 474-505 (VTTT…VREP), 510-541 (VTTT…VREP), 546-577 (VTTT…VKEP), 582-613 (VTTT…VREP), and 618-649 (VTTT…IHDP). Disordered stretches follow at residues 652–752 (ESSS…SSSS) and 864–885 (ASSF…SSDQ). N665 is a glycosylation site (N-linked (GlcNAc...) asparagine). N-linked (GlcNAc...) asparagine glycosylation is present at N919. Disordered stretches follow at residues 926-966 (SESE…DSST), 981-1035 (TGMP…TKSS), 1051-1093 (TSTL…KESS), 1134-1177 (EDNE…TTDV), and 1211-1252 (ATSL…NRLS). 3 stretches are compositionally biased toward low complexity: residues 928-942 (SESS…ASES), 951-966 (SEST…DSST), and 993-1011 (TSDV…PTSA). Polar residues predominate over residues 1012–1022 (EQSITDNPNID). 2 stretches are compositionally biased toward low complexity: residues 1023-1035 (SSQT…TKSS) and 1051-1078 (TSTL…GNIN). Composition is skewed to polar residues over residues 1079-1093 (AGSS…KESS) and 1138-1160 (PNTF…SVLS). A compositionally biased stretch (low complexity) spans 1212–1230 (TSLRSTSSSSNHATESSGT). 2 N-linked (GlcNAc...) asparagine glycosylation sites follow: N1301 and N1326. The GPI-anchor amidated serine moiety is linked to residue S1398. Residues 1399-1419 (SATKHPSWLLKFISVALFFFL) constitute a propeptide, removed in mature form.

This sequence belongs to the ALS family. In terms of assembly, forms homodimers through the tandem repeats. Aggregates in amyloid-like structures, with self-propagating secondary-structure changes, amyloid-characteristic dye binding, and induced birefringence. Post-translationally, N-glycosylated and O-glycosylated. The GPI-anchor is attached to the protein in the endoplasmic reticulum and serves to target the protein to the cell surface. There, the glucosamine-inositol phospholipid moiety is cleaved off and the GPI-modified mannoprotein is covalently attached via its lipidless GPI glycan remnant to the 1,6-beta-glucan of the outer cell wall layer.

It is found in the cell membrane. It localises to the secreted. The protein localises to the cell wall. Its function is as follows. Cell surface adhesion protein which mediates both yeast-to-host tissue adherence and yeast aggregation. Plays an important role in the pathogenesis of C.albicans infections. Forms amyloid structures, essential for cell-cell association and cell-substrate adhesion to polystyrene. In Candida albicans (Yeast), this protein is Agglutinin-like protein 5 (ALS5).